The sequence spans 72 residues: MAKQSAIEQDGVIVEALSNAMFRVELENGHEITAHISGKMRMHYIKILPGDKVRVEMSPYDLSKGRIVFRYK.

An S1-like domain is found at 1–72; it reads MAKQSAIEQD…SKGRIVFRYK (72 aa).

This sequence belongs to the IF-1 family. Component of the 30S ribosomal translation pre-initiation complex which assembles on the 30S ribosome in the order IF-2 and IF-3, IF-1 and N-formylmethionyl-tRNA(fMet); mRNA recruitment can occur at any time during PIC assembly.

It is found in the cytoplasm. Its function is as follows. One of the essential components for the initiation of protein synthesis. Stabilizes the binding of IF-2 and IF-3 on the 30S subunit to which N-formylmethionyl-tRNA(fMet) subsequently binds. Helps modulate mRNA selection, yielding the 30S pre-initiation complex (PIC). Upon addition of the 50S ribosomal subunit IF-1, IF-2 and IF-3 are released leaving the mature 70S translation initiation complex. This Bacteroides fragilis (strain ATCC 25285 / DSM 2151 / CCUG 4856 / JCM 11019 / LMG 10263 / NCTC 9343 / Onslow / VPI 2553 / EN-2) protein is Translation initiation factor IF-1.